The chain runs to 822 residues: Epidermal growth factor receptor kinase substrate 8 (822 aa).

Polar residues-rich tracts occupy residues 1–10 (MNGHISNHPS) and 17–30 (SQMN…TFSQ). The tract at residues 1–39 (MNGHISNHPSSFGMYPSQMNGYGSSPTFSQTDREHGSKT) is disordered. A Phosphoserine modification is found at S58. The region spanning 64-194 (QYRVEHLTTF…SDSKGGKQKR (131 aa)) is the PTB domain. Disordered regions lie at residues 202 to 225 (ISNA…GTVT) and 298 to 320 (SKRK…TLRA). Pro residues predominate over residues 208–221 (SIPPPPRAPAPAPP). T223 bears the Phosphothreonine mark. Basic residues predominate over residues 299-309 (KRKKNKKGKRK). Residue T317 is modified to Phosphothreonine. S476 is subject to Phosphoserine. The region spanning 531 to 590 (QPKKYAKSKYDFVARNNSELSVLKDDILEILDDRKQWWKVRNASGDSGFVPNNILDIVRP) is the SH3 domain. The disordered stretch occupies residues 612 to 689 (EYGPRPADTP…VDRRKSQMEE (78 aa)). Pro residues predominate over residues 618-645 (ADTPPAPSPPPTPAPVPVPLPPSTPAPV). S625 carries the phosphoserine modification. T629 carries the post-translational modification Phosphothreonine; by MAPK. The interval 649-822 (KVPANITRQN…VESFDEGSSH (174 aa)) is effector region. 3 positions are modified to phosphoserine: S659, S662, and S685. Positions 671-687 (DSQRHKQLPVDRRKSQM) are enriched in basic and acidic residues. Positions 680 to 698 (VDRRKSQMEEVQDELIHRL) are amphipathic helix. 4 helix bundle regions span residues 718–738 (VINI…QSKG), 752–757 (GAQLFS), 762–767 (ELRTVC), and 766–785 (VCPE…AALE). Residues 787-822 (SSGSSELQEIMRRRQEKISAAASDSGVESFDEGSSH) form a disordered region. 2 positions are modified to phosphoserine: S811 and S815.

It belongs to the EPS8 family. As to quaternary structure, homodimer. Part of a complex consisting of ABI1, EPS8 and SOS1. Interacts with MYO15A and WHRN. Interacts with LANCL1. Interacts with EGFR; mediates EPS8 phosphorylation. Interacts with BAIAP2. Interacts with SHB. Ubiquitinated by the SCF(FBXW5) E3 ubiquitin-protein ligase complex during G2 phase, leading to its transient degradation and subsequent cell shape changes required to allow mitotic progression. Reappears at the midzone of dividing cells. In terms of processing, phosphorylation at Ser-625 and Thr-629 by MAPK following BDNF treatment promotes removal from actin and filopodia formation. Phosphorylated by several receptor tyrosine kinases. In terms of tissue distribution, expressed in all tissues analyzed, including heart, brain, placenta, lung, liver, skeletal muscle, kidney and pancreas. Expressed in all epithelial and fibroblastic lines examined and in some, but not all, hematopoietic cells.

It localises to the cytoplasm. Its subcellular location is the cell cortex. The protein localises to the cell projection. It is found in the ruffle membrane. The protein resides in the growth cone. It localises to the stereocilium. Its subcellular location is the synapse. The protein localises to the synaptosome. Signaling adapter that controls various cellular protrusions by regulating actin cytoskeleton dynamics and architecture. Depending on its association with other signal transducers, can regulate different processes. Together with SOS1 and ABI1, forms a trimeric complex that participates in transduction of signals from Ras to Rac by activating the Rac-specific guanine nucleotide exchange factor (GEF) activity. Acts as a direct regulator of actin dynamics by binding actin filaments and has both barbed-end actin filament capping and actin bundling activities depending on the context. Displays barbed-end actin capping activity when associated with ABI1, thereby regulating actin-based motility process: capping activity is auto-inhibited and inhibition is relieved upon ABI1 interaction. Also shows actin bundling activity when associated with BAIAP2, enhancing BAIAP2-dependent membrane extensions and promoting filopodial protrusions. Involved in the regulation of processes such as axonal filopodia growth, stereocilia length, dendritic cell migration and cancer cell migration and invasion. Acts as a regulator of axonal filopodia formation in neurons: in the absence of neurotrophic factors, negatively regulates axonal filopodia formation via actin-capping activity. In contrast, it is phosphorylated in the presence of BDNF leading to inhibition of its actin-capping activity and stimulation of filopodia formation. Component of a complex with WHRN and MYO15A that localizes at stereocilia tips and is required for elongation of the stereocilia actin core. Indirectly involved in cell cycle progression; its degradation following ubiquitination being required during G2 phase to promote cell shape changes. The chain is Epidermal growth factor receptor kinase substrate 8 (EPS8) from Homo sapiens (Human).